The chain runs to 85 residues: MLYFCLLLVLLLPNNGVSSEASCARMDVPVMQRIAQGLCTSSCTAQKCMTGICKKVDSHPTCFCGGCSNANDVSLDTLISQLPHN.

An N-terminal signal peptide occupies residues 1-19 (MLYFCLLLVLLLPNNGVSS).

As to expression, expressed in the pharynx and body wall muscle.

The protein resides in the secreted. The protein is Antibacterial factor-related peptide 1 of Caenorhabditis elegans.